The sequence spans 277 residues: Isoprenyl transferase 1 (277 aa).

A disordered region spans residues 1 to 30 (MAVRGILGRQRREYRTPEPHPSGARPPKLG). Residue Asp42 is part of the active site. Asp42 contacts Mg(2+). Substrate contacts are provided by residues 43-46 (GNGR), Trp47, Arg55, His59, and 87-89 (STE). Residue Asn90 is the Proton acceptor of the active site. Substrate contacts are provided by residues Trp91, Arg93, Arg210, and 216–218 (RTS). Glu229 provides a ligand contact to Mg(2+).

It belongs to the UPP synthase family. Homodimer. Mg(2+) is required as a cofactor.

Functionally, catalyzes the condensation of isopentenyl diphosphate (IPP) with allylic pyrophosphates generating different type of terpenoids. This is Isoprenyl transferase 1 from Streptomyces coelicolor (strain ATCC BAA-471 / A3(2) / M145).